Here is a 465-residue protein sequence, read N- to C-terminus: Ribulose bisphosphate carboxylase large chain (465 aa).

At lysine 4 the chain carries N6,N6,N6-trimethyllysine. Substrate contacts are provided by asparagine 113 and threonine 163. The Proton acceptor role is filled by lysine 165. Position 167 (lysine 167) interacts with substrate. 3 residues coordinate Mg(2+): lysine 191, aspartate 193, and glutamate 194. Lysine 191 carries the post-translational modification N6-carboxylysine. Catalysis depends on histidine 284, which acts as the Proton acceptor. The substrate site is built by arginine 285, histidine 317, and serine 369.

It belongs to the RuBisCO large chain family. Type I subfamily. As to quaternary structure, heterohexadecamer of 8 large chains and 8 small chains; disulfide-linked. The disulfide link is formed within the large subunit homodimers. Mg(2+) serves as cofactor. Post-translationally, the disulfide bond which can form in the large chain dimeric partners within the hexadecamer appears to be associated with oxidative stress and protein turnover.

The protein resides in the plastid. It localises to the chloroplast. The enzyme catalyses 2 (2R)-3-phosphoglycerate + 2 H(+) = D-ribulose 1,5-bisphosphate + CO2 + H2O. It carries out the reaction D-ribulose 1,5-bisphosphate + O2 = 2-phosphoglycolate + (2R)-3-phosphoglycerate + 2 H(+). Functionally, ruBisCO catalyzes two reactions: the carboxylation of D-ribulose 1,5-bisphosphate, the primary event in carbon dioxide fixation, as well as the oxidative fragmentation of the pentose substrate in the photorespiration process. Both reactions occur simultaneously and in competition at the same active site. In Platytheca verticillata, this protein is Ribulose bisphosphate carboxylase large chain.